Reading from the N-terminus, the 309-residue chain is L-lactate dehydrogenase (309 aa).

NAD(+) is bound by residues Val12, Asp33, Arg38, Tyr63, and 77 to 78 (GA). Substrate contacts are provided by residues Gln80, Arg86, and 118–121 (NPVD). NAD(+)-binding positions include 116-118 (ATN) and Ser141. Substrate is bound at residue 146–149 (DSAR). The beta-D-fructose 1,6-bisphosphate site is built by Arg151 and His166. Residue His173 is the Proton acceptor of the active site. Phosphotyrosine is present on Tyr219. Thr228 is a substrate binding site.

Belongs to the LDH/MDH superfamily. LDH family. Homotetramer.

The protein localises to the cytoplasm. It catalyses the reaction (S)-lactate + NAD(+) = pyruvate + NADH + H(+). Its pathway is fermentation; pyruvate fermentation to lactate; (S)-lactate from pyruvate: step 1/1. Allosterically activated by fructose 1,6-bisphosphate (FBP). Its function is as follows. Catalyzes the conversion of lactate to pyruvate. This Nitratidesulfovibrio vulgaris (strain ATCC 29579 / DSM 644 / CCUG 34227 / NCIMB 8303 / VKM B-1760 / Hildenborough) (Desulfovibrio vulgaris) protein is L-lactate dehydrogenase.